The chain runs to 519 residues: Threonine synthase, chloroplastic (519 aa).

The transit peptide at 1–40 directs the protein to the chloroplast; that stretch reads MAASCMLRSSFISPGLPQLHHQSTSKPNNGIHFFTPIKAT. Residue K196 is modified to N6-(pyridoxal phosphate)lysine. Pyridoxal 5'-phosphate contacts are provided by residues 328-332 and T465; that span reads GNLGN.

The protein belongs to the threonine synthase family. Homodimer. Pyridoxal 5'-phosphate is required as a cofactor.

It is found in the plastid. It localises to the chloroplast. It catalyses the reaction O-phospho-L-homoserine + H2O = L-threonine + phosphate. It functions in the pathway amino-acid biosynthesis; L-threonine biosynthesis; L-threonine from L-aspartate: step 5/5. With respect to regulation, allosterically activated by S-adenosyl-methionine (SAM). In terms of biological role, catalyzes the gamma-elimination of phosphate from L-phosphohomoserine and the beta-addition of water to produce L-threonine. This is Threonine synthase, chloroplastic from Solanum tuberosum (Potato).